We begin with the raw amino-acid sequence, 371 residues long: Cytochrome b (371 aa).

Transmembrane regions (helical) follow at residues 25 to 45 (FGSM…FLAV), 69 to 90 (WMMQ…YIHI), 105 to 125 (WLSG…XXXX), and 170 to 190 (XXXX…LHIM). Heme b is bound by residues His-75 and His-89. 2 residues coordinate heme b: Xaa-174 and His-188. His-193 is a binding site for a ubiquinone. Helical transmembrane passes span 218 to 238 (YKDL…VSFL), 280 to 300 (LGGA…PFTH), 312 to 332 (IMQL…WAAT), and 339 to 358 (FTMI…ITNP).

This sequence belongs to the cytochrome b family. As to quaternary structure, the cytochrome bc1 complex contains 3 respiratory subunits (MT-CYB, CYC1 and UQCRFS1), 2 core proteins (UQCRC1 and UQCRC2) and probably 6 low-molecular weight proteins. Requires heme b as cofactor.

Its subcellular location is the mitochondrion inner membrane. Its function is as follows. Component of the ubiquinol-cytochrome c reductase complex (complex III or cytochrome b-c1 complex) that is part of the mitochondrial respiratory chain. The b-c1 complex mediates electron transfer from ubiquinol to cytochrome c. Contributes to the generation of a proton gradient across the mitochondrial membrane that is then used for ATP synthesis. In Eryx jaculus (Javelin sand boa), this protein is Cytochrome b (MT-CYB).